We begin with the raw amino-acid sequence, 364 residues long: DNA replication and repair protein RecF (364 aa).

ATP is bound at residue 30–37; the sequence is GNNGQGKT.

Belongs to the RecF family.

It is found in the cytoplasm. Functionally, the RecF protein is involved in DNA metabolism; it is required for DNA replication and normal SOS inducibility. RecF binds preferentially to single-stranded, linear DNA. It also seems to bind ATP. In Geotalea daltonii (strain DSM 22248 / JCM 15807 / FRC-32) (Geobacter daltonii), this protein is DNA replication and repair protein RecF.